Consider the following 426-residue polypeptide: Phosphomethylpyrimidine synthase (426 aa).

Residues Asn-65, Met-94, Tyr-123, His-162, 184–186, 225–228, and Glu-264 contribute to the substrate site; these read SRG and DGMR. Position 268 (His-268) interacts with Zn(2+). Tyr-291 lines the substrate pocket. His-332 serves as a coordination point for Zn(2+). [4Fe-4S] cluster is bound by residues Cys-408, Cys-411, and Cys-415.

Belongs to the ThiC family. [4Fe-4S] cluster serves as cofactor.

It carries out the reaction 5-amino-1-(5-phospho-beta-D-ribosyl)imidazole + S-adenosyl-L-methionine = 4-amino-2-methyl-5-(phosphooxymethyl)pyrimidine + CO + 5'-deoxyadenosine + formate + L-methionine + 3 H(+). Its pathway is cofactor biosynthesis; thiamine diphosphate biosynthesis. Functionally, catalyzes the synthesis of the hydroxymethylpyrimidine phosphate (HMP-P) moiety of thiamine from aminoimidazole ribotide (AIR) in a radical S-adenosyl-L-methionine (SAM)-dependent reaction. In Methanococcus maripaludis (strain C7 / ATCC BAA-1331), this protein is Phosphomethylpyrimidine synthase.